A 195-amino-acid polypeptide reads, in one-letter code: Large ribosomal subunit protein uL5 (195 aa).

The protein belongs to the universal ribosomal protein uL5 family. As to quaternary structure, part of the 50S ribosomal subunit; part of the 5S rRNA/L5/L18/L25 subcomplex. Contacts the 5S rRNA and the P site tRNA. Forms a bridge to the 30S subunit in the 70S ribosome.

Its function is as follows. This is one of the proteins that bind and probably mediate the attachment of the 5S RNA into the large ribosomal subunit, where it forms part of the central protuberance. In the 70S ribosome it contacts protein S13 of the 30S subunit (bridge B1b), connecting the 2 subunits; this bridge is implicated in subunit movement. Contacts the P site tRNA; the 5S rRNA and some of its associated proteins might help stabilize positioning of ribosome-bound tRNAs. The chain is Large ribosomal subunit protein uL5 from Chlorobium chlorochromatii (strain CaD3).